A 184-amino-acid polypeptide reads, in one-letter code: Deoxyuridine 5'-triphosphate nucleotidohydrolase (184 aa).

Positions 1–16 (MPHTQTDAHQNNQENF) are enriched in polar residues. The interval 1–25 (MPHTQTDAHQNNQENFSSSLISSRP) is disordered. Substrate-binding positions include 96 to 98 (RSG), N109, 113 to 115 (TID), and K123. The tract at residues 165–184 (STKNTVGNRGAGGFGSTGHD) is disordered. The span at 173–184 (RGAGGFGSTGHD) shows a compositional bias: gly residues.

Belongs to the dUTPase family. It depends on Mg(2+) as a cofactor.

The enzyme catalyses dUTP + H2O = dUMP + diphosphate + H(+). The protein operates within pyrimidine metabolism; dUMP biosynthesis; dUMP from dCTP (dUTP route): step 2/2. In terms of biological role, this enzyme is involved in nucleotide metabolism: it produces dUMP, the immediate precursor of thymidine nucleotides and it decreases the intracellular concentration of dUTP so that uracil cannot be incorporated into DNA. The protein is Deoxyuridine 5'-triphosphate nucleotidohydrolase of Bartonella henselae (strain ATCC 49882 / DSM 28221 / CCUG 30454 / Houston 1) (Rochalimaea henselae).